The sequence spans 367 residues: Metacaspase-1 (367 aa).

A disordered region spans residues 47–77; it reads DPRTAPPPQPSSAPSPPPQIHAPPGQLPHPH. Residues 50–73 show a composition bias toward pro residues; sequence TAPPPQPSSAPSPPPQIHAPPGQL. Residues H164 and C220 contribute to the active site.

Belongs to the peptidase C14B family. Interacts (via N-terminus) with LSD1. Proteolytically processed; by an autocatalytic mechanism.

Its function is as follows. Cysteine protease that cleaves specifically after arginine or lysine residues. Does not cleave caspase-specific substrates. Acts as a positive regulator of cell death. Required for both oxidative stress cell death response and hypersensitive cell death response mediated by immune response. This Arabidopsis thaliana (Mouse-ear cress) protein is Metacaspase-1 (AMC1).